The primary structure comprises 2313 residues: Voltage-dependent R-type calcium channel subunit alpha-1E (2313 aa).

A disordered region spans residues 1–38 (MARFGEAVVARPGSGDGDSDQSRNRQGTPVPASGQAAA). The Cytoplasmic segment spans residues 1 to 89 (MARFGEAVVA…KYAKKLIDWP (89 aa)). Phosphoserine is present on residues Ser14 and Ser19. One copy of the I repeat lies at 76–354 (NIVRKYAKKL…LVLGVLSGEF (279 aa)). A helical membrane pass occupies residues 90–108 (PFEYMILATIIANCIVLAL). Residues 109–127 (EQHLPEDDKTPMSRRLEKT) lie on the Extracellular side of the membrane. The chain crosses the membrane as a helical span at residues 128–146 (EPYFIGIFCFEAGIKIVAL). Topologically, residues 147–158 (GFIFHKGSYLRN) are cytoplasmic. A helical transmembrane segment spans residues 159-173 (GWNVMDFIVVLSGIL). Topologically, residues 174 to 185 (ATAGTHFNTHVD) are extracellular. The helical transmembrane segment at 186–205 (LRTLRAVRVLRPLKLVSGIP) threads the bilayer. At 206–223 (SLQIVLKSIMKAMVPLLQ) the chain is on the cytoplasmic side. Residues 224 to 244 (IGLLLFFAILMFAIIGLEFYS) traverse the membrane as a helical segment. The Extracellular portion of the chain corresponds to 245 to 326 (GKLHRACFMN…NTNDALGATW (82 aa)). N-linked (GlcNAc...) asparagine glycosylation is present at Asn254. The chain crosses the membrane as a helical span at residues 327–350 (NWLYFIPLIIIGSFFVLNLVLGVL). Residues 351–476 (SGEFAKERER…ISIRHMVKSQ (126 aa)) are Cytoplasmic-facing. The interval 374-391 (QQIERELNGYRAWIDKAE) is binding to the beta subunit. Residue Asp426 coordinates Ca(2+). Phosphoserine is present on Ser427. Ca(2+) is bound by residues Ser428, Glu430, and Cys432. Thr440 carries the phosphothreonine modification. Residues 462-706 (ERLLRISIRH…VFLAIAVDNL (245 aa)) form an II repeat. A helical transmembrane segment spans residues 477 to 496 (VFYWIVLSLVALNTACVAIV). The Extracellular segment spans residues 497–509 (HHNQPQWLTHLLY). A helical membrane pass occupies residues 510-529 (YAEFLFLGLFLLEMSLKMYG). At 530 to 538 (MGPRLYFHS) the chain is on the cytoplasmic side. A helical transmembrane segment spans residues 539–557 (SFNCFDFGVTVGSIFEVVW). The Extracellular segment spans residues 558-567 (AIFRPGTSFG). The chain crosses the membrane as a helical span at residues 568–586 (ISVLRALRLLRIFKITKYW). The Cytoplasmic portion of the chain corresponds to 587-605 (ASLRNLVVSLMSSMKSIIS). Residues 606 to 625 (LLFLLFLFIVVFALLGMQLF) form a helical membrane-spanning segment. The Extracellular segment spans residues 626 to 678 (GGRFNFNDGTPSANFDTFPAAIMTVFQILTGEDWNEVMYNGIRSQGGVSSGMW). Residues 679–703 (SAIYFIVLTLFGNYTLLNVFLAIAV) traverse the membrane as a helical segment. Residues 704 to 1148 (DNLANAQELT…TNPIRRACHY (445 aa)) lie on the Cytoplasmic side of the membrane. Residues 729–774 (LQKAKEVSPMSAPNMPSIERDRRRRHHMSMWEPRSSHLRERRRRHH) are disordered. Phosphoserine is present on residues Ser736, Ser745, Ser793, Ser815, and Ser855. The tract at residues 851-984 (SRGGSLKGDG…EERAQDLRRT (134 aa)) is disordered. Over residues 866-875 (ALDNQRTPLS) the composition is skewed to polar residues. The span at 913 to 926 (RHRQSQRRSRHRRV) shows a compositional bias: basic residues. Low complexity predominate over residues 933–945 (SSSASRSRSASQE). Residue Ser947 is modified to Phosphoserine. Positions 955 to 983 (EGEKDHELRGNHGAKEPTIQEERAQDLRR) are enriched in basic and acidic residues. Ser1097 bears the Phosphoserine mark. Residues 1103-1125 (EIREDEEEVEKKKQKKEKRETGK) form a disordered region. The stretch at 1140–1426 (NPIRRACHYI…IFVALIIITF (287 aa)) is one III repeat. A helical membrane pass occupies residues 1149–1165 (IVNLRYFEMCILLVIAA). The Extracellular portion of the chain corresponds to 1166–1189 (SSIALAAEDPVLTNSERNKVLRYF). Residues 1190–1209 (DYVFTGVFTFEMVIKMIDQG) traverse the membrane as a helical segment. Over 1210–1217 (LILQDGSY) the chain is Cytoplasmic. The chain crosses the membrane as a helical span at residues 1218 to 1240 (FRDLWNILDFVVVVGALVAFALA). Residues 1241–1254 (NALGTNKGRDIKTI) lie on the Extracellular side of the membrane. Residues 1255-1272 (KSLRVLRVLRPLKTIKRL) form a helical membrane-spanning segment. Over 1273-1291 (PKLKAVFDCVVTSLKNVFN) the chain is Cytoplasmic. Residues 1292–1311 (ILIVYKLFMFIFAVIAVQLF) traverse the membrane as a helical segment. Residues 1312–1398 (KGKFFYCTDS…RGPSRSNRME (87 aa)) are Extracellular-facing. A helical membrane pass occupies residues 1399-1422 (MSIFYVVYFVVFPFFFVNIFVALI). The Cytoplasmic segment spans residues 1423–1479 (IITFQEQGDKMMEECSLEKNERACIDFAISAKPLTRYMPQNRHTFQYRVWHFVVSPS). The IV repeat unit spans residues 1463–1726 (NRHTFQYRVW…LFVAVIMDNF (264 aa)). The helical transmembrane segment at 1480-1498 (FEYTIMAMIALNTVVLMMK) threads the bilayer. At 1499-1513 (YYSAPCTYELALKYL) the chain is on the extracellular side. The chain crosses the membrane as a helical span at residues 1514–1533 (NIAFTMVFSLECVLKVIAFG). Topologically, residues 1534-1541 (FLNYFRDT) are cytoplasmic. Residues 1542–1560 (WNIFDFITVIGSITEIILT) traverse the membrane as a helical segment. Topologically, residues 1561-1571 (DSKLVNTSGFN) are extracellular. 2 N-linked (GlcNAc...) asparagine glycosylation sites follow: Asn1566 and Asn1571. A helical transmembrane segment spans residues 1572–1590 (MSFLKLFRAARLIKLLRQG). Residues 1591–1609 (YTIRILLWTFVQSFKALPY) lie on the Cytoplasmic side of the membrane. Residues 1610–1629 (VCLLIAMLFFIYAIIGMQVF) form a helical membrane-spanning segment. Residues 1630-1698 (GNIKLDEESH…NENERCGTDL (69 aa)) are Extracellular-facing. The helical transmembrane segment at 1699 to 1724 (AYVYFVSFIFFCSFLMLNLFVAVIMD) threads the bilayer. At 1725-2313 (NFEYLTRDSS…LSDTEEDDKC (589 aa)) the chain is on the cytoplasmic side. The EF-hand domain maps to 1739-1774 (HHLDEFVRVWAEYDRAACGRIHYTEMYEMLTLMSPP). The Ca(2+) site is built by Asp1752, Arg1758, and Glu1763. 3 disordered regions span residues 1970–2170 (VSEL…RPLL), 2206–2225 (CLTE…ASPQ), and 2263–2295 (SNTI…GPGM). Residues 2012-2023 (TDPSSMRRSFST) are compositionally biased toward polar residues. The span at 2055–2064 (HSSLRLSAHR) shows a compositional bias: low complexity. The segment covering 2065–2085 (LNSDSGHKSDTHRSGGRERGR) has biased composition (basic and acidic residues). Residues Ser2094 and Ser2113 each carry the phosphoserine modification. The span at 2101-2118 (NSEERGTQADWESPERRQ) shows a compositional bias: basic and acidic residues. The segment covering 2129-2152 (TPNRQGTGSLSESSIPSVSDTSTP) has biased composition (polar residues). The span at 2210–2225 (SSNSPHPQQSQHASPQ) shows a compositional bias: low complexity.

Belongs to the calcium channel alpha-1 subunit (TC 1.A.1.11) family. CACNA1E subfamily. In terms of assembly, interacts with EFHC1. Voltage-dependent calcium channels are multisubunit complexes, consisting of alpha-1, alpha-2, beta and delta subunits in a 1:1:1:1 ratio. The channel activity is directed by the pore-forming and voltage-sensitive alpha-1 subunit. In many cases, this subunit is sufficient to generate voltage-sensitive calcium channel activity. The auxiliary subunits beta and alpha-2/delta linked by a disulfide bridge regulate the channel activity. In terms of tissue distribution, expressed in neuronal tissues and in kidney.

It localises to the membrane. The enzyme catalyses Ca(2+)(in) = Ca(2+)(out). Its function is as follows. Voltage-sensitive calcium channels (VSCC) mediate the entry of calcium ions into excitable cells. They are also involved in a variety of calcium-dependent processes, including muscle contraction, hormone or neurotransmitter release, gene expression, cell motility, cell division and cell death. The isoform alpha-1E gives rise to R-type calcium currents. R-type calcium channels belong to the 'high-voltage activated' (HVA) group and are blocked by nickel. They are however insensitive to dihydropyridines (DHP). Calcium channels containing alpha-1E subunit could be involved in the modulation of firing patterns of neurons which is important for information processing. In terms of biological role, voltage-sensitive calcium channels (VSCC) mediate the entry of calcium ions into excitable cells. They are also involved in a variety of calcium-dependent processes, including muscle contraction, hormone or neurotransmitter release, gene expression, cell motility, cell division and cell death. The isoform alpha-1E gives rise to R-type calcium currents. This Homo sapiens (Human) protein is Voltage-dependent R-type calcium channel subunit alpha-1E (CACNA1E).